The sequence spans 215 residues: 3-demethoxyubiquinol 3-hydroxylase (215 aa).

Positions 64, 94, 97, 146, 178, and 181 each coordinate Fe cation.

This sequence belongs to the COQ7 family. The cofactor is Fe cation.

It localises to the cell membrane. The enzyme catalyses a 5-methoxy-2-methyl-3-(all-trans-polyprenyl)benzene-1,4-diol + AH2 + O2 = a 3-demethylubiquinol + A + H2O. The protein operates within cofactor biosynthesis; ubiquinone biosynthesis. Catalyzes the hydroxylation of 2-nonaprenyl-3-methyl-6-methoxy-1,4-benzoquinol during ubiquinone biosynthesis. The protein is 3-demethoxyubiquinol 3-hydroxylase of Pseudomonas aeruginosa (strain LESB58).